Reading from the N-terminus, the 185-residue chain is Ribosome-recycling factor (185 aa).

The protein belongs to the RRF family.

It localises to the cytoplasm. Functionally, responsible for the release of ribosomes from messenger RNA at the termination of protein biosynthesis. May increase the efficiency of translation by recycling ribosomes from one round of translation to another. This Salinispora tropica (strain ATCC BAA-916 / DSM 44818 / JCM 13857 / NBRC 105044 / CNB-440) protein is Ribosome-recycling factor.